Consider the following 209-residue polypeptide: Zinc finger SWIM domain-containing protein sws1 (209 aa).

Polar residues predominate over residues 1–30 (MQQGHFTSNSYHSKTLNSSSLPVSSKFSHT). The tract at residues 1-33 (MQQGHFTSNSYHSKTLNSSSLPVSSKFSHTNDP) is disordered. The segment at 143–203 (TTIDLKYWYC…HILAASILRA (61 aa)) adopts an SWIM-type zinc-finger fold.

Interacts with rdl1, rlp1 and srs2.

Its subcellular location is the cytoplasm. It is found in the nucleus. The protein resides in the nucleoplasm. Involved in early stages of the homologous recombination repair (HRR) pathway of double-stranded DNA breaks arising during DNA replication or induced by DNA-damaging agents. The polypeptide is Zinc finger SWIM domain-containing protein sws1 (sws1) (Schizosaccharomyces pombe (strain 972 / ATCC 24843) (Fission yeast)).